Here is a 225-residue protein sequence, read N- to C-terminus: Ribosome maturation factor RimM (225 aa).

Residues Ala-144 to Tyr-225 enclose the PRC barrel domain.

It belongs to the RimM family. Binds ribosomal protein uS19.

The protein resides in the cytoplasm. An accessory protein needed during the final step in the assembly of 30S ribosomal subunit, possibly for assembly of the head region. Essential for efficient processing of 16S rRNA. May be needed both before and after RbfA during the maturation of 16S rRNA. It has affinity for free ribosomal 30S subunits but not for 70S ribosomes. The chain is Ribosome maturation factor RimM from Burkholderia orbicola (strain MC0-3).